Consider the following 579-residue polypeptide: Insulin-like growth factor 2 mRNA-binding protein 3 (579 aa).

RRM domains lie at Asn-2–Pro-75 and Arg-81–Asp-156. Residues Thr-158–Lys-192 form a disordered region. Phosphoserine is present on Ser-165. Ser-184 is modified (phosphoserine; by MTOR). KH domains follow at residues Asp-195–Ile-260, Glu-276–Ile-343, and Thr-405–Ile-470. Residues Lys-450 and Lys-475 each participate in a glycyl lysine isopeptide (Lys-Gly) (interchain with G-Cter in SUMO2) cross-link. Positions Lys-487–Ile-553 constitute a KH 4 domain. The residue at position 528 (Thr-528) is a Phosphothreonine.

It belongs to the RRM IMP/VICKZ family. As to quaternary structure, can form homooligomers and heterooligomers with IGF2BP1 and IGF2BP3 in an RNA-dependent manner. Interacts with IGF2BP1. Interacts with ELAVL1, DHX9, HNRNPU, MATR3 and PABPC1. As to expression, expressed in oocytes, spermatogonia and spermatocytes (at protein level).

The protein localises to the nucleus. It is found in the cytoplasm. Its subcellular location is the P-body. The protein resides in the stress granule. Functionally, RNA-binding factor that may recruit target transcripts to cytoplasmic protein-RNA complexes (mRNPs). This transcript 'caging' into mRNPs allows mRNA transport and transient storage. It also modulates the rate and location at which target transcripts encounter the translational apparatus and shields them from endonuclease attacks or microRNA-mediated degradation. Preferentially binds to N6-methyladenosine (m6A)-containing mRNAs and increases their stability. Binds to the 3'-UTR of CD44 mRNA and stabilizes it, hence promotes cell adhesion and invadopodia formation. Binds to beta-actin/ACTB and MYC transcripts. Increases MYC mRNA stability by binding to the coding region instability determinant (CRD) and binding is enhanced by m6A-modification of the CRD. Binds to the 5'-UTR of the insulin-like growth factor 2 (IGF2) mRNAs. This Mus musculus (Mouse) protein is Insulin-like growth factor 2 mRNA-binding protein 3 (Igf2bp3).